The chain runs to 393 residues: RNA pseudouridine synthase 7 (393 aa).

The region spanning 49-118 is the S4 RNA-binding domain; sequence KTIVDLFTDE…GDITILQNEA (70 aa). The active site involves Asp162.

It belongs to the pseudouridine synthase RluA family.

It carries out the reaction a uridine in RNA = a pseudouridine in RNA. The sequence is that of RNA pseudouridine synthase 7 from Oryza sativa subsp. japonica (Rice).